Here is a 311-residue protein sequence, read N- to C-terminus: Olfactory receptor 14I1 (311 aa).

Residues 1 to 26 are Extracellular-facing; sequence MDNLTKVTEFLLMEFSGIWELQVLHA. N3 carries N-linked (GlcNAc...) asparagine glycosylation. A helical transmembrane segment spans residues 27–47; sequence GLFLLIYLAVLVGNLLIIAVI. Residues 48–55 lie on the Cytoplasmic side of the membrane; it reads TLDQHLHT. Residues 56–76 form a helical membrane-spanning segment; that stretch reads PMYFFLKNLSVLDLCYISVTV. The Extracellular segment spans residues 77 to 92; sequence PKSIRNSLTRRSSISY. Residues 93 to 113 form a helical membrane-spanning segment; the sequence is LGCVAQVYFFSAFASAELAFL. C95 and C188 are oxidised to a cystine. The Cytoplasmic segment spans residues 114 to 141; the sequence is TVMSYDRYVAICHPLQYRAVMTSGGCYQ. Residues 142 to 162 form a helical membrane-spanning segment; sequence MAVTTWLSCFSYAAVHTGNMF. Residues 163 to 189 are Extracellular-facing; the sequence is REHVCRSSVIHQFFRDIPHVLALVSCE. The helical transmembrane segment at 190–210 threads the bilayer; it reads VFFVEFLTLALSSCLVLGCFI. Over 211-241 the chain is Cytoplasmic; the sequence is LMMISYFQIFSTVLRIPSGQSRAKAFSTCSP. The chain crosses the membrane as a helical span at residues 242 to 262; that stretch reads QLIVIMLFLTTGLFAALGPIA. Residues 263–269 are Extracellular-facing; the sequence is KALSIQD. The helical transmembrane segment at 270-290 threads the bilayer; the sequence is LVIALTYTVLPPFLNPIIYSL. Residues 291–311 lie on the Cytoplasmic side of the membrane; it reads RNKEIKTAMWRLFVKIYFLQK.

The protein belongs to the G-protein coupled receptor 1 family.

The protein resides in the cell membrane. Odorant receptor. In Homo sapiens (Human), this protein is Olfactory receptor 14I1 (OR14I1).